A 219-amino-acid polypeptide reads, in one-letter code: MGQKVNPHGLRVGVINDWDSRWYAEADFADNLVEDYNIRTYLKKKLYSAGVAKIEIERASDKLKVIIHTAKPGVVIGKGGAEIEKLKVEITQYTTKKLNLEIKEIKKPDVCAQLVAESIAAQLENRISFRRAMKSTMSRTMRSGAKGIKTAVSGRLGGADMARTEFYSEGTIPLQTLRADIDYGFAEADTTFGKLGVKAWIYHGEVLPTKGNKKEGSDK.

In terms of domain architecture, KH type-2 spans Ile-38–Lys-106.

Belongs to the universal ribosomal protein uS3 family. Part of the 30S ribosomal subunit. Forms a tight complex with proteins S10 and S14.

Its function is as follows. Binds the lower part of the 30S subunit head. Binds mRNA in the 70S ribosome, positioning it for translation. The sequence is that of Small ribosomal subunit protein uS3 from Lachnoclostridium phytofermentans (strain ATCC 700394 / DSM 18823 / ISDg) (Clostridium phytofermentans).